The following is a 341-amino-acid chain: L-threonine 3-dehydrogenase (341 aa).

A Zn(2+)-binding site is contributed by Cys38. Active-site charge relay system residues include Thr40 and His43. Zn(2+) is bound by residues His63, Glu64, Cys93, Cys96, Cys99, and Cys107. NAD(+) is bound by residues Ile175, Asp195, Arg200, 262–264 (LGI), and 286–287 (IY).

The protein belongs to the zinc-containing alcohol dehydrogenase family. Homotetramer. It depends on Zn(2+) as a cofactor.

The protein resides in the cytoplasm. It carries out the reaction L-threonine + NAD(+) = (2S)-2-amino-3-oxobutanoate + NADH + H(+). It functions in the pathway amino-acid degradation; L-threonine degradation via oxydo-reductase pathway; glycine from L-threonine: step 1/2. Catalyzes the NAD(+)-dependent oxidation of L-threonine to 2-amino-3-ketobutyrate. The sequence is that of L-threonine 3-dehydrogenase from Shewanella baltica (strain OS223).